The following is a 748-amino-acid chain: MFNEITKSVTWNGQVLELSTGKIARQADGAVTVKMGNSVLLCTAVVANKAKEGIGFLPLTINYREMAYAAGKIPGGFFKHEGKPSDREVLVSRLIDRPIRPLFHPAFVNETHVTCSVLSYDPETPVDILAIIGASAALSLSPAPYLEIVAASKVGLINGEFVLNPTLALLKTSQLDLVVAGTSDSVMMVESEAHLLSEEQMLEAVKFGFESFQPVIKIIKELAEEAKKPKLEMQALYPASLKKEIEKLFVKEIEQAFAMKSKQERSTNLDLITEKVFTHFVSDIENKKYSHYQIESALKAIESGILRNEILEKNRRIDGRSTTDIRQIACEIGLLPSAHGSALFTRGETQSLVSTTFGTSLDEQIVDSLEGEYKERFMLNYIFPPYSVNEAMPMKAPSRREVGHGKLAWRAINPILPNKVQFPYSIRVVAETTESNGSSSMATVCGSSLALMYAGVPIKAPVAGIAMGLVKEGKNFAVLSDILGDEDYFGDMDFKVAGTGEGITALQMDIKISGVDFKIMKVALEQARLGRLHILEQMNKVISKPNNELSKNAPSTTTIKIDKDKIRDIIGPGGKVIKEICETSGAKIDISDDGTVSVYASDRDKLKVALDKIKAIVVEPEIGEIFNGTVVKVLDSGAFINYVGNKDGFVHISEVSGERIETVSSVLKQGDIVKVKLIGFDNKGKAKLTIKNADKDKFSNNTKPKTSVNNTKDNSEPEQRHDSSKKRAWNEDNNAEIAEVITERKYFN.

The Mg(2+) site is built by aspartate 487 and aspartate 493. The 60-residue stretch at 554-613 (PSTTTIKIDKDKIRDIIGPGGKVIKEICETSGAKIDISDDGTVSVYASDRDKLKVALDKI) folds into the KH domain. In terms of domain architecture, S1 motif spans 623–691 (GEIFNGTVVK…NKGKAKLTIK (69 aa)). The interval 695 to 733 (KDKFSNNTKPKTSVNNTKDNSEPEQRHDSSKKRAWNEDN) is disordered. Over residues 699-712 (SNNTKPKTSVNNTK) the composition is skewed to polar residues. Basic and acidic residues predominate over residues 713-722 (DNSEPEQRHD).

This sequence belongs to the polyribonucleotide nucleotidyltransferase family. Requires Mg(2+) as cofactor.

It localises to the cytoplasm. It carries out the reaction RNA(n+1) + phosphate = RNA(n) + a ribonucleoside 5'-diphosphate. Functionally, involved in mRNA degradation. Catalyzes the phosphorolysis of single-stranded polyribonucleotides processively in the 3'- to 5'-direction. In Rickettsia rickettsii (strain Iowa), this protein is Polyribonucleotide nucleotidyltransferase.